The following is a 77-amino-acid chain: U14-theraphotoxin-Cg1c (77 aa).

The signal sequence occupies residues Met1–Ala21. The propeptide occupies Ser22–Arg49. Disulfide bonds link Cys50–Cys64 and Cys57–Cys69.

The protein belongs to the neurotoxin 10 (Hwtx-1) family. 65 (Jztx-21) subfamily. As to expression, expressed by the venom gland.

The protein localises to the secreted. Functionally, probable ion channel inhibitor. This is U14-theraphotoxin-Cg1c from Chilobrachys guangxiensis (Chinese earth tiger tarantula).